Here is a 107-residue protein sequence, read N- to C-terminus: uncharacterized protein (107 aa).

A helical membrane pass occupies residues 13–33; that stretch reads VLIVTFLSSFIFIVWLPVALV.

The protein localises to the membrane. This is an uncharacterized protein from Saccharomyces cerevisiae (strain ATCC 204508 / S288c) (Baker's yeast).